A 245-amino-acid polypeptide reads, in one-letter code: 1-(5-phosphoribosyl)-5-[(5-phosphoribosylamino)methylideneamino] imidazole-4-carboxamide isomerase (245 aa).

D7 functions as the Proton acceptor in the catalytic mechanism. D129 acts as the Proton donor in catalysis.

It belongs to the HisA/HisF family.

The protein localises to the cytoplasm. The catalysed reaction is 1-(5-phospho-beta-D-ribosyl)-5-[(5-phospho-beta-D-ribosylamino)methylideneamino]imidazole-4-carboxamide = 5-[(5-phospho-1-deoxy-D-ribulos-1-ylimino)methylamino]-1-(5-phospho-beta-D-ribosyl)imidazole-4-carboxamide. The protein operates within amino-acid biosynthesis; L-histidine biosynthesis; L-histidine from 5-phospho-alpha-D-ribose 1-diphosphate: step 4/9. This chain is 1-(5-phosphoribosyl)-5-[(5-phosphoribosylamino)methylideneamino] imidazole-4-carboxamide isomerase, found in Serratia proteamaculans (strain 568).